A 385-amino-acid chain; its full sequence is Flavin-dependent monooxygenase (385 aa).

FAD contacts are provided by residues 12–15, 34–36, 44–47, Arg-105, Tyr-267, Asp-289, and 296–302; these read ASIA, EKN, YAID, and PLSGQGT.

Belongs to the aromatic-ring hydroxylase family. It depends on FAD as a cofactor.

The catalysed reaction is 7-chlorotetracycline + NADPH + O2 + H(+) = (1S,10S,10aS)-3-(CONH2)-9-Cl-1-(Me2N)-3,3a,4,10-(HO)4-10-Me-2,5-dioxo-1H,10aH,11H,11aH-cyclopenta[b]anthracen-6-olate + CO + NADP(+) + H2O. It carries out the reaction a tetracycline + NADPH + O2 + H(+) = a (1S,10aS)-3-(CONH2)-1-(Me2N)-3,3a,4,6-(HO)4-2,5-dioxo-1H,10aH,11H,11aH-cyclopenta[b]anthracene + CO + NADP(+) + H2O. Its activity is regulated as follows. Inhibited by anhydrotetracycline. An FAD-requiring monooxygenase active on tetracycline antibiotic and some of its derivatives, which leads to their inactivation. Expression in E.coli confers high resistance to oxytetracycline, slightly less resistance to tetracycline, moderate resistance to minocycline but no resistance to tigecycline. Degrades tetracycline and oxytetracycline; the reaction requires NADPH. Degrades and confers resistance to chlortetracycline. The sequence is that of Flavin-dependent monooxygenase from Unknown prokaryotic organism.